The primary structure comprises 787 residues: Disintegrin and metalloproteinase domain-containing protein 32 (787 aa).

The signal sequence occupies residues 1–16 (MFRLWLLLAGLCGLLA). Serine 17 is modified (phosphoserine). The propeptide occupies 17–174 (SRPGFQNSLL…PMDDNIFISE (158 aa)). Residues asparagine 39 and asparagine 125 are each glycosylated (N-linked (GlcNAc...) asparagine). The Extracellular portion of the chain corresponds to 175 to 682 (KSEPAVPDLF…ERASGKTENT (508 aa)). Residues 186–383 (LYLEMHIVVD…VGVKCLQNKP (198 aa)) form the Peptidase M12B domain. Cystine bridges form between cysteine 295/cysteine 378, cysteine 337/cysteine 362, cysteine 339/cysteine 344, and cysteine 450/cysteine 471. Positions 391-479 (KPVCGNGRLE…ECGPDITLIN (89 aa)) constitute a Disintegrin domain. Residues asparagine 465 and asparagine 598 are each glycosylated (N-linked (GlcNAc...) asparagine). An EGF-like domain is found at 622-654 (SAHVCSQQCSGHGVCDSRNKCHCSPGYKPPNCQ). 3 disulfide bridges follow: cysteine 626–cysteine 636, cysteine 630–cysteine 642, and cysteine 644–cysteine 653. Residues 683-703 (WLLGFLIALPILIVTTAIVLA) form a helical membrane-spanning segment. At 704 to 787 (RKQLKKWFAK…DSTQTQSSSN (84 aa)) the chain is on the cytoplasmic side. The tract at residues 715–787 (EEFPSSESKS…DSTQTQSSSN (73 aa)) is disordered. Polar residues predominate over residues 728–749 (TQTYASQSSSEGSTQTYASQTR). The span at 771-787 (TSRSKSQDSTQTQSSSN) shows a compositional bias: low complexity.

As to expression, testis specific.

Its subcellular location is the membrane. In terms of biological role, may play a role in sperm development and fertilization This is a non-catalytic metalloprotease-like protein. This Homo sapiens (Human) protein is Disintegrin and metalloproteinase domain-containing protein 32 (ADAM32).